The primary structure comprises 136 residues: MQTTGALLISPALLRSCTRGLIRPVSASFLSRPEIPSEQPPCSSVPLQVARREFQTSVVSRDIDTAAKFIGAGAATVGVAGSGAGIGTVFGSLIIGYARNPSLKQQLFSYAILGFALFEAMGLFCLMVAFLILFAM.

Residues 1-61 (MQTTGALLIS…REFQTSVVSR (61 aa)) constitute a mitochondrion transit peptide. A helical membrane pass occupies residues 77 to 97 (VGVAGSGAGIGTVFGSLIIGY). Lys104 carries the N6,N6,N6-trimethyllysine modification. Residues 112 to 132 (ILGFALFEAMGLFCLMVAFLI) traverse the membrane as a helical segment.

Belongs to the ATPase C chain family. In terms of assembly, homooctamer; the c-ring consists of eight c subunits forming a circle, and each subunit adopts a hairpin shape. Component of the ATP synthase complex composed at least of ATP5F1A/subunit alpha, ATP5F1B/subunit beta, ATP5MC1/subunit c (homooctomer), MT-ATP6/subunit a, MT-ATP8/subunit 8, ATP5ME/subunit e, ATP5MF/subunit f, ATP5MG/subunit g, ATP5MK/subunit k, ATP5MJ/subunit j, ATP5F1C/subunit gamma, ATP5F1D/subunit delta, ATP5F1E/subunit epsilon, ATP5PF/subunit F6, ATP5PB/subunit b, ATP5PD/subunit d, ATP5PO/subunit OSCP. ATP synthase complex consists of a soluble F(1) head domain (subunits alpha(3) and beta(3)) - the catalytic core - and a membrane F(0) domain - the membrane proton channel (subunits c, a, 8, e, f, g, k and j). These two domains are linked by a central stalk (subunits gamma, delta, and epsilon) rotating inside the F1 region and a stationary peripheral stalk (subunits F6, b, d, and OSCP). Interacts with TMEM70 (homooligomer form); this interaction facilitates the oligomer formation of subunit c/ATP5MC1 (c-ring) and the c-ring membrane insertion and also protects ATP5MC1 against intramitochondrial proteolysis. Post-translationally, trimethylated by ATPSCKMT at Lys-104. Methylation is required for proper incorporation of the C subunit into the ATP synthase complex and mitochondrial respiration.

It localises to the mitochondrion membrane. The catalysed reaction is H(+)(in) = H(+)(out). Its function is as follows. Subunit c, of the mitochondrial membrane ATP synthase complex (F(1)F(0) ATP synthase or Complex V) that produces ATP from ADP in the presence of a proton gradient across the membrane which is generated by electron transport complexes of the respiratory chain. ATP synthase complex consist of a soluble F(1) head domain - the catalytic core - and a membrane F(1) domain - the membrane proton channel. These two domains are linked by a central stalk rotating inside the F(1) region and a stationary peripheral stalk. During catalysis, ATP synthesis in the catalytic domain of F(1) is coupled via a rotary mechanism of the central stalk subunits to proton translocation. With the subunit a (MT-ATP6), forms the proton-conducting channel in the F(0) domain, that contains two crucial half-channels (inlet and outlet) that facilitate proton movement from the mitochondrial intermembrane space (IMS) into the matrix. Protons are taken up via the inlet half-channel and released through the outlet half-channel, following a Grotthuss mechanism. The protein is ATP synthase F(0) complex subunit C1, mitochondrial of Sus scrofa (Pig).